The sequence spans 371 residues: Anhydro-N-acetylmuramic acid kinase (371 aa).

10-17 provides a ligand contact to ATP; sequence GTSLDGID.

The protein belongs to the anhydro-N-acetylmuramic acid kinase family.

The enzyme catalyses 1,6-anhydro-N-acetyl-beta-muramate + ATP + H2O = N-acetyl-D-muramate 6-phosphate + ADP + H(+). The protein operates within amino-sugar metabolism; 1,6-anhydro-N-acetylmuramate degradation. It functions in the pathway cell wall biogenesis; peptidoglycan recycling. Catalyzes the specific phosphorylation of 1,6-anhydro-N-acetylmuramic acid (anhMurNAc) with the simultaneous cleavage of the 1,6-anhydro ring, generating MurNAc-6-P. Is required for the utilization of anhMurNAc either imported from the medium or derived from its own cell wall murein, and thus plays a role in cell wall recycling. The polypeptide is Anhydro-N-acetylmuramic acid kinase (Chromohalobacter salexigens (strain ATCC BAA-138 / DSM 3043 / CIP 106854 / NCIMB 13768 / 1H11)).